A 262-amino-acid polypeptide reads, in one-letter code: Hydroxyethylthiazole kinase (262 aa).

Met40 provides a ligand contact to substrate. Residues Lys116 and Thr162 each contribute to the ATP site. Gly189 is a substrate binding site.

The protein belongs to the Thz kinase family. It depends on Mg(2+) as a cofactor.

It carries out the reaction 5-(2-hydroxyethyl)-4-methylthiazole + ATP = 4-methyl-5-(2-phosphooxyethyl)-thiazole + ADP + H(+). The protein operates within cofactor biosynthesis; thiamine diphosphate biosynthesis; 4-methyl-5-(2-phosphoethyl)-thiazole from 5-(2-hydroxyethyl)-4-methylthiazole: step 1/1. Its function is as follows. Catalyzes the phosphorylation of the hydroxyl group of 4-methyl-5-beta-hydroxyethylthiazole (THZ). The polypeptide is Hydroxyethylthiazole kinase (Clostridioides difficile (strain 630) (Peptoclostridium difficile)).